A 340-amino-acid polypeptide reads, in one-letter code: Uroporphyrinogen decarboxylase (340 aa).

Substrate-binding positions include 21–25 (RQAGR), Asp-71, Tyr-148, Ser-203, and His-316.

It belongs to the uroporphyrinogen decarboxylase family. As to quaternary structure, homodimer.

It is found in the cytoplasm. The enzyme catalyses uroporphyrinogen III + 4 H(+) = coproporphyrinogen III + 4 CO2. Its pathway is porphyrin-containing compound metabolism; protoporphyrin-IX biosynthesis; coproporphyrinogen-III from 5-aminolevulinate: step 4/4. Functionally, catalyzes the decarboxylation of four acetate groups of uroporphyrinogen-III to yield coproporphyrinogen-III. The sequence is that of Uroporphyrinogen decarboxylase from Campylobacter hominis (strain ATCC BAA-381 / DSM 21671 / CCUG 45161 / LMG 19568 / NCTC 13146 / CH001A).